We begin with the raw amino-acid sequence, 225 residues long: Probable septum site-determining protein MinC (225 aa).

It belongs to the MinC family. Interacts with MinD and FtsZ.

Its function is as follows. Cell division inhibitor that blocks the formation of polar Z ring septums. Rapidly oscillates between the poles of the cell to destabilize FtsZ filaments that have formed before they mature into polar Z rings. Prevents FtsZ polymerization. This is Probable septum site-determining protein MinC from Listeria welshimeri serovar 6b (strain ATCC 35897 / DSM 20650 / CCUG 15529 / CIP 8149 / NCTC 11857 / SLCC 5334 / V8).